The sequence spans 650 residues: 1-deoxy-D-xylulose-5-phosphate synthase (650 aa).

Thiamine diphosphate-binding positions include H87 and 128 to 130; that span reads GHS. D159 provides a ligand contact to Mg(2+). Residues 160–161, N188, Y299, and E383 contribute to the thiamine diphosphate site; that span reads GS. N188 is a binding site for Mg(2+).

Belongs to the transketolase family. DXPS subfamily. As to quaternary structure, homodimer. It depends on Mg(2+) as a cofactor. Thiamine diphosphate is required as a cofactor.

The enzyme catalyses D-glyceraldehyde 3-phosphate + pyruvate + H(+) = 1-deoxy-D-xylulose 5-phosphate + CO2. It functions in the pathway metabolic intermediate biosynthesis; 1-deoxy-D-xylulose 5-phosphate biosynthesis; 1-deoxy-D-xylulose 5-phosphate from D-glyceraldehyde 3-phosphate and pyruvate: step 1/1. Catalyzes the acyloin condensation reaction between C atoms 2 and 3 of pyruvate and glyceraldehyde 3-phosphate to yield 1-deoxy-D-xylulose-5-phosphate (DXP). The chain is 1-deoxy-D-xylulose-5-phosphate synthase from Syntrophus aciditrophicus (strain SB).